A 259-amino-acid chain; its full sequence is MQIHDKPTLKAEARNLNFYYGEAKALKGINMPIYDKKVTALIGPSGCGKSTYLRSFNRMHDLYPGNRYEGEIRFFPDNTNLLSPEVDPIEVRMRVGMVFQKPNPFPKTIYENVAYGLRVRGENNKRALDDKVEHALRGAAIWDEVKDRLQDMAPNLSGGQQQRLCIARALATDPELLLFDEPTSALDPIATGAIEELVHELKKRVTILIVTHNMQQAARVSDYTAYMYLGELIEFGKTDEIFIKPQDKRTEDYITGRMG.

The ABC transporter domain occupies 11–254; the sequence is AEARNLNFYY…PQDKRTEDYI (244 aa). 43 to 50 lines the ATP pocket; the sequence is GPSGCGKS.

The protein belongs to the ABC transporter superfamily. Phosphate importer (TC 3.A.1.7) family. As to quaternary structure, the complex is composed of two ATP-binding proteins (PstB), two transmembrane proteins (PstC and PstA) and a solute-binding protein (PstS).

The protein localises to the cell inner membrane. The enzyme catalyses phosphate(out) + ATP + H2O = ADP + 2 phosphate(in) + H(+). Part of the ABC transporter complex PstSACB involved in phosphate import. Responsible for energy coupling to the transport system. This is Phosphate import ATP-binding protein PstB from Dechloromonas aromatica (strain RCB).